The chain runs to 376 residues: N-acetyldiaminopimelate deacetylase (376 aa).

D69 is an active-site residue. The active-site Proton acceptor is the E127.

Belongs to the peptidase M20A family. N-acetyldiaminopimelate deacetylase subfamily.

It carries out the reaction N-acetyl-(2S,6S)-2,6-diaminopimelate + H2O = (2S,6S)-2,6-diaminopimelate + acetate. It functions in the pathway amino-acid biosynthesis; L-lysine biosynthesis via DAP pathway; LL-2,6-diaminopimelate from (S)-tetrahydrodipicolinate (acetylase route): step 3/3. Functionally, catalyzes the conversion of N-acetyl-diaminopimelate to diaminopimelate and acetate. The sequence is that of N-acetyldiaminopimelate deacetylase from Lactococcus lactis subsp. cremoris (strain SK11).